Here is a 628-residue protein sequence, read N- to C-terminus: 1-deoxy-D-xylulose-5-phosphate synthase (628 aa).

Residues histidine 80 and 121-123 each bind thiamine diphosphate; that span reads GHS. A Mg(2+)-binding site is contributed by aspartate 152. Thiamine diphosphate contacts are provided by residues 153–154, asparagine 181, tyrosine 289, and glutamate 370; that span reads GG. Residue asparagine 181 participates in Mg(2+) binding.

This sequence belongs to the transketolase family. DXPS subfamily. Homodimer. Requires Mg(2+) as cofactor. Thiamine diphosphate serves as cofactor.

The catalysed reaction is D-glyceraldehyde 3-phosphate + pyruvate + H(+) = 1-deoxy-D-xylulose 5-phosphate + CO2. It participates in metabolic intermediate biosynthesis; 1-deoxy-D-xylulose 5-phosphate biosynthesis; 1-deoxy-D-xylulose 5-phosphate from D-glyceraldehyde 3-phosphate and pyruvate: step 1/1. Its function is as follows. Catalyzes the acyloin condensation reaction between C atoms 2 and 3 of pyruvate and glyceraldehyde 3-phosphate to yield 1-deoxy-D-xylulose-5-phosphate (DXP). This is 1-deoxy-D-xylulose-5-phosphate synthase from Alkalilimnicola ehrlichii (strain ATCC BAA-1101 / DSM 17681 / MLHE-1).